A 106-amino-acid chain; its full sequence is Large ribosomal subunit protein bL21 (106 aa).

This sequence belongs to the bacterial ribosomal protein bL21 family. Part of the 50S ribosomal subunit. Contacts protein L20.

In terms of biological role, this protein binds to 23S rRNA in the presence of protein L20. The protein is Large ribosomal subunit protein bL21 of Chlamydia felis (strain Fe/C-56) (Chlamydophila felis).